We begin with the raw amino-acid sequence, 353 residues long: Chloroplastic lipocalin (353 aa).

Over residues 1–18 the composition is skewed to low complexity; sequence MILLSSSISLSRPVSSQS. Positions 1–27 are disordered; sequence MILLSSSISLSRPVSSQSFSPPAATST. The N-terminal 39 residues, 1–39, are a transit peptide targeting the chloroplast; that stretch reads MILLSSSISLSRPVSSQSFSPPAATSTRRSHSSVTVKCC. An intrachain disulfide couples Cys-163 to Cys-299.

This sequence belongs to the calycin superfamily. Lipocalin family. Expressed in leaves at low levels (at protein levels). Present in seeds.

The protein resides in the plastid. Its subcellular location is the chloroplast thylakoid lumen. Its function is as follows. Lipocalin that prevents thylakoidal membrane lipids peroxidation and confers protection against oxidative stress, especially mediated by singlet oxygen in response to high light and other stress (e.g. heat shocks). Required for seed longevity by ensuring polyunsaturated lipids integrity. This Arabidopsis thaliana (Mouse-ear cress) protein is Chloroplastic lipocalin.